Reading from the N-terminus, the 373-residue chain is MPRECELCGTERAVLRRPKTGDLVCRACFFHVFETEVHQTIVEAQLFRRGDRVAIGASGGKDSTVLAYVMKTLNERYDYGLNLFLLSIDEGITGYRDDSLETVKRNQEQYGIPLKVLGYKELYGWSMDDIVASIGRKNNCTFCGVFRRQALDRGAASLGVDHIVTGHNADDMAETVLMNVLRGDIARLERCTDIITKGPDGVDGDEDDDETEGCGAGRSGFGGSGIRRSKPFKYAYEKEIVMYAYFKQLDYFSTECIYSPNAYRGYARAFLKDLESIRPSSIIDIIHSGENLHVAGQVKRAVQRTCTRCGYISSNELCKACVLLEGLNRGAPALGVRSDKSRAVREARLDGTSDIGRTIPRWEGVQRSSATAW.

This sequence belongs to the TtcA family. CTU1/NCS6/ATPBD3 subfamily.

It is found in the cytoplasm. It participates in tRNA modification; 5-methoxycarbonylmethyl-2-thiouridine-tRNA biosynthesis. Functionally, plays a central role in 2-thiolation of mcm(5)S(2)U at tRNA wobble positions of tRNA(Lys), tRNA(Glu) and tRNA(Gln). Directly binds tRNAs and probably acts by catalyzing adenylation of tRNAs, an intermediate required for 2-thiolation. It is unclear whether it acts as a sulfurtransferase that transfers sulfur from thiocarboxylated URM1 onto the uridine of tRNAs at wobble position. Prior mcm(5) tRNA modification by the elongator complex is required for 2-thiolation. May also be involved in protein urmylation. This is Cytoplasmic tRNA 2-thiolation protein 1 from Malassezia globosa (strain ATCC MYA-4612 / CBS 7966) (Dandruff-associated fungus).